A 694-amino-acid chain; its full sequence is Elongation factor G 2 (694 aa).

The tr-type G domain occupies 6 to 282; the sequence is SKLRNIGISA…GVVDYLPDPT (277 aa). Residues 15–22, 82–86, and 136–139 contribute to the GTP site; these read AHIDSGKT, DTPGH, and NKCD.

It belongs to the TRAFAC class translation factor GTPase superfamily. Classic translation factor GTPase family. EF-G/EF-2 subfamily.

It is found in the cytoplasm. Catalyzes the GTP-dependent ribosomal translocation step during translation elongation. During this step, the ribosome changes from the pre-translocational (PRE) to the post-translocational (POST) state as the newly formed A-site-bound peptidyl-tRNA and P-site-bound deacylated tRNA move to the P and E sites, respectively. Catalyzes the coordinated movement of the two tRNA molecules, the mRNA and conformational changes in the ribosome. In Anaeromyxobacter dehalogenans (strain 2CP-C), this protein is Elongation factor G 2.